The sequence spans 149 residues: MEIILKQDFKGLGYKNEIVKVKPGYARNYLIPQGFALVANETNKKIAQENAKQMAHKMAKRKQDAESIANRLSQLAIKIKAKVGEKGKIFGAITPIQIADALKEQTGYIADRRDISFEKPIKTLGTHKAIIKLHKEVVLTLSFEVIAEE.

The protein belongs to the bacterial ribosomal protein bL9 family.

Binds to the 23S rRNA. This is Large ribosomal subunit protein bL9 from Amoebophilus asiaticus (strain 5a2).